The sequence spans 164 residues: Endoribonuclease YbeY (164 aa).

Zn(2+)-binding residues include His111, His115, and His121. Residues Glu140–Glu164 form a disordered region. Residues His155–Glu164 show a composition bias toward polar residues.

The protein belongs to the endoribonuclease YbeY family. The cofactor is Zn(2+).

The protein localises to the cytoplasm. Single strand-specific metallo-endoribonuclease involved in late-stage 70S ribosome quality control and in maturation of the 3' terminus of the 16S rRNA. This Pseudomonas fluorescens (strain SBW25) protein is Endoribonuclease YbeY.